Reading from the N-terminus, the 207-residue chain is Ribosomal RNA small subunit methyltransferase G (207 aa).

S-adenosyl-L-methionine-binding positions include glycine 75, phenylalanine 80, leucine 126–glutamate 127, and arginine 140.

The protein belongs to the methyltransferase superfamily. RNA methyltransferase RsmG family.

It is found in the cytoplasm. The catalysed reaction is guanosine(527) in 16S rRNA + S-adenosyl-L-methionine = N(7)-methylguanosine(527) in 16S rRNA + S-adenosyl-L-homocysteine. In terms of biological role, specifically methylates the N7 position of guanine in position 527 of 16S rRNA. This is Ribosomal RNA small subunit methyltransferase G from Erythrobacter litoralis (strain HTCC2594).